The chain runs to 454 residues: Cathepsin C (454 aa).

The N-terminal stretch at 1-20 is a signal peptide; that stretch reads MHWVFHCILIILACLRFTCA. A propeptide spanning residues 21–217 is cleaved from the precursor; the sequence is DTPANCTYED…SKELISLTGN (197 aa). N-linked (GlcNAc...) asparagine glycosylation occurs at Asn25. Disulfide bonds link Cys26/Cys107, Cys244/Cys287, and Cys280/Cys321. Cys247 is a catalytic residue. A glycan (N-linked (GlcNAc...) asparagine) is linked at Asn265. Phe291 provides a ligand contact to chloride. A glycan (N-linked (GlcNAc...) asparagine) is linked at Asn326. Tyr337 provides a ligand contact to chloride. Catalysis depends on residues His398 and Asn420.

The protein belongs to the peptidase C1 family. It depends on chloride as a cofactor.

It localises to the lysosome. Thiol protease. Has a role as a digestive enzyme. This chain is Cathepsin C, found in Schistosoma mansoni (Blood fluke).